Here is a 238-residue protein sequence, read N- to C-terminus: Cysteine-rich venom protein 2 (238 aa).

The first 19 residues, 1-19 (MIAFIVLLSLAAVLQQSSG), serve as a signal peptide directing secretion. The SCP domain occupies 38–164 (VDKHNALRRS…STKYLYVCQY (127 aa)). 8 cysteine pairs are disulfide-bonded: C75–C153, C92–C165, C148–C162, C184–C191, C187–C196, C200–C233, C209–C227, and C218–C231. The 34-residue stretch at 200–233 (CEYEDAYTNCNDLVKERKCQTEWIKSQCPATCFC) folds into the ShKT domain.

Belongs to the CRISP family. As to expression, expressed by the venom gland.

It is found in the secreted. Its function is as follows. Blocks contraction of smooth muscle elicited by high potassium-induced depolarization, but does not block caffeine-stimulated contraction. May target voltage-gated calcium channels (Cav) on smooth muscle. This chain is Cysteine-rich venom protein 2, found in Hydrophis hardwickii (Hardwick's spine-bellied seasnake).